A 432-amino-acid chain; its full sequence is Glutamate-1-semialdehyde 2,1-aminomutase (432 aa).

N6-(pyridoxal phosphate)lysine is present on K270.

This sequence belongs to the class-III pyridoxal-phosphate-dependent aminotransferase family. HemL subfamily. In terms of assembly, homodimer. Requires pyridoxal 5'-phosphate as cofactor.

It is found in the cytoplasm. It catalyses the reaction (S)-4-amino-5-oxopentanoate = 5-aminolevulinate. The protein operates within porphyrin-containing compound metabolism; protoporphyrin-IX biosynthesis; 5-aminolevulinate from L-glutamyl-tRNA(Glu): step 2/2. This is Glutamate-1-semialdehyde 2,1-aminomutase from Acinetobacter baylyi (strain ATCC 33305 / BD413 / ADP1).